Reading from the N-terminus, the 94-residue chain is Acylphosphatase (94 aa).

The Acylphosphatase-like domain occupies 7–94; it reads RLTARITGVV…GEFDDFRIID (88 aa). Catalysis depends on residues R22 and N40.

Belongs to the acylphosphatase family.

The catalysed reaction is an acyl phosphate + H2O = a carboxylate + phosphate + H(+). The polypeptide is Acylphosphatase (acyP) (Paenarthrobacter aurescens (strain TC1)).